The chain runs to 231 residues: 2-C-methyl-D-erythritol 2,4-cyclodiphosphate synthase, chloroplastic (231 aa).

Residues 1–52 constitute a chloroplast transit peptide; that stretch reads MATSSTQLLLSSSSLFHSQITKKPFLLPATKIGVWRPKKSLSLSCRPSASVS. A divalent metal cation-binding residues include aspartate 82 and histidine 84. Substrate contacts are provided by residues 82–84, 108–109, 112–120, 130–132, 135–139, aspartate 139, 174–180, and 205–209; these read DLH, HS, DVLLHCVVD, DIG, FPDSD, LQRPKIS, and AKTHE. Histidine 116 is an a divalent metal cation binding site.

This sequence belongs to the IspF family. In terms of assembly, homotrimer. Requires a divalent metal cation as cofactor.

It localises to the plastid. It is found in the chloroplast stroma. It carries out the reaction 4-CDP-2-C-methyl-D-erythritol 2-phosphate = 2-C-methyl-D-erythritol 2,4-cyclic diphosphate + CMP. It participates in isoprenoid biosynthesis; isopentenyl diphosphate biosynthesis via DXP pathway; isopentenyl diphosphate from 1-deoxy-D-xylulose 5-phosphate: step 4/6. Its function is as follows. Enzyme of the plastid non-mevalonate pathway for isoprenoid biosynthesis that converts 4-diphosphocytidyl-2C-methyl-D-erythritol 2-phosphate into 2C-methyl-D-erythritol 2,4-cyclodiphosphate and CMP. Is essential for chloroplast development. The chain is 2-C-methyl-D-erythritol 2,4-cyclodiphosphate synthase, chloroplastic from Arabidopsis thaliana (Mouse-ear cress).